Here is a 118-residue protein sequence, read N- to C-terminus: Large ribosomal subunit protein bL20 (118 aa).

The protein belongs to the bacterial ribosomal protein bL20 family.

In terms of biological role, binds directly to 23S ribosomal RNA and is necessary for the in vitro assembly process of the 50S ribosomal subunit. It is not involved in the protein synthesizing functions of that subunit. The chain is Large ribosomal subunit protein bL20 from Sulfurihydrogenibium sp. (strain YO3AOP1).